A 184-amino-acid chain; its full sequence is dTTP/UTP pyrophosphatase (184 aa).

Asp-67 (proton acceptor) is an active-site residue.

It belongs to the Maf family. YhdE subfamily. Requires a divalent metal cation as cofactor.

The protein localises to the cytoplasm. It catalyses the reaction dTTP + H2O = dTMP + diphosphate + H(+). The catalysed reaction is UTP + H2O = UMP + diphosphate + H(+). Nucleoside triphosphate pyrophosphatase that hydrolyzes dTTP and UTP. May have a dual role in cell division arrest and in preventing the incorporation of modified nucleotides into cellular nucleic acids. The chain is dTTP/UTP pyrophosphatase from Elusimicrobium minutum (strain Pei191).